Consider the following 297-residue polypeptide: 4-hydroxy-tetrahydrodipicolinate synthase (297 aa).

A pyruvate-binding site is contributed by threonine 47. Residue tyrosine 136 is the Proton donor/acceptor of the active site. The Schiff-base intermediate with substrate role is filled by lysine 165. Isoleucine 206 contacts pyruvate.

It belongs to the DapA family. Homotetramer; dimer of dimers.

Its subcellular location is the cytoplasm. The catalysed reaction is L-aspartate 4-semialdehyde + pyruvate = (2S,4S)-4-hydroxy-2,3,4,5-tetrahydrodipicolinate + H2O + H(+). Its pathway is amino-acid biosynthesis; L-lysine biosynthesis via DAP pathway; (S)-tetrahydrodipicolinate from L-aspartate: step 3/4. Its function is as follows. Catalyzes the condensation of (S)-aspartate-beta-semialdehyde [(S)-ASA] and pyruvate to 4-hydroxy-tetrahydrodipicolinate (HTPA). The protein is 4-hydroxy-tetrahydrodipicolinate synthase of Campylobacter curvus (strain 525.92).